The sequence spans 163 residues: NADH-quinone oxidoreductase subunit I (163 aa).

2 4Fe-4S ferredoxin-type domains span residues 54-84 and 94-123; these read LRRYPNGEERCIACKLCEAVCPALAITIDSH and TRYDIDMFKCIYCGFCEESCPVDSIVLTRL. Cys-64, Cys-67, Cys-70, Cys-74, Cys-103, Cys-106, Cys-109, and Cys-113 together coordinate [4Fe-4S] cluster.

It belongs to the complex I 23 kDa subunit family. As to quaternary structure, NDH-1 is composed of 14 different subunits. Subunits NuoA, H, J, K, L, M, N constitute the membrane sector of the complex. [4Fe-4S] cluster serves as cofactor.

Its subcellular location is the cell inner membrane. It catalyses the reaction a quinone + NADH + 5 H(+)(in) = a quinol + NAD(+) + 4 H(+)(out). NDH-1 shuttles electrons from NADH, via FMN and iron-sulfur (Fe-S) centers, to quinones in the respiratory chain. The immediate electron acceptor for the enzyme in this species is believed to be ubiquinone. Couples the redox reaction to proton translocation (for every two electrons transferred, four hydrogen ions are translocated across the cytoplasmic membrane), and thus conserves the redox energy in a proton gradient. The protein is NADH-quinone oxidoreductase subunit I of Halorhodospira halophila (strain DSM 244 / SL1) (Ectothiorhodospira halophila (strain DSM 244 / SL1)).